The primary structure comprises 311 residues: Methionyl-tRNA formyltransferase (311 aa).

A (6S)-5,6,7,8-tetrahydrofolate-binding site is contributed by 112–115; that stretch reads SLLP.

This sequence belongs to the Fmt family.

The enzyme catalyses L-methionyl-tRNA(fMet) + (6R)-10-formyltetrahydrofolate = N-formyl-L-methionyl-tRNA(fMet) + (6S)-5,6,7,8-tetrahydrofolate + H(+). In terms of biological role, attaches a formyl group to the free amino group of methionyl-tRNA(fMet). The formyl group appears to play a dual role in the initiator identity of N-formylmethionyl-tRNA by promoting its recognition by IF2 and preventing the misappropriation of this tRNA by the elongation apparatus. The protein is Methionyl-tRNA formyltransferase of Sinorhizobium medicae (strain WSM419) (Ensifer medicae).